Reading from the N-terminus, the 154-residue chain is Methylglyoxal synthase (154 aa).

One can recognise an MGS-like domain in the interval 6–154; the sequence is SPLPANKAIA…AYMARRAQGN (149 aa). Substrate-binding positions include His19, Lys23, 45–48, and 65–66; these read TGTT and SG. Asp71 acts as the Proton donor/acceptor in catalysis. Residue His98 coordinates substrate.

This sequence belongs to the methylglyoxal synthase family.

It catalyses the reaction dihydroxyacetone phosphate = methylglyoxal + phosphate. Catalyzes the formation of methylglyoxal from dihydroxyacetone phosphate. The sequence is that of Methylglyoxal synthase from Cellvibrio japonicus (strain Ueda107) (Pseudomonas fluorescens subsp. cellulosa).